Consider the following 559-residue polypeptide: Formate--tetrahydrofolate ligase (559 aa).

68–75 (TPAGEGKT) provides a ligand contact to ATP.

Belongs to the formate--tetrahydrofolate ligase family.

It catalyses the reaction (6S)-5,6,7,8-tetrahydrofolate + formate + ATP = (6R)-10-formyltetrahydrofolate + ADP + phosphate. It functions in the pathway one-carbon metabolism; tetrahydrofolate interconversion. The chain is Formate--tetrahydrofolate ligase from Moorella thermoacetica (strain ATCC 39073 / JCM 9320).